The following is a 286-amino-acid chain: Lipid phosphate phosphatase epsilon 2, chloroplastic (286 aa).

The N-terminal 60 residues, 1-60, are a transit peptide targeting the chloroplast; that stretch reads MAASSSSLLLLHKPTYNFHFAASSVPTYINSARFRISSSIFPLDRRRRRRIWSVSGFKSM. 5 helical membrane passes run 133-149, 173-193, 194-214, 226-246, and 260-280; these read LWAVIGSVSNSVLSVAL, AQSISFISVFSVFSVMEWLGT, NVLSLFLSGFILALGSYFTWL, VVVGAIVGSVYSTLWYVTWNS, and IALFLVAAASALGFAVYVLLN.

It belongs to the PA-phosphatase related phosphoesterase family. As to expression, expressed in root tips, root branch points, cotyledons and leaves.

The protein localises to the plastid. The protein resides in the chloroplast inner membrane. With respect to regulation, inhibited by Mg(2+). Functionally, exhibits phosphatidate phosphatase (PAP) activity in vitro. May play a secondary role as PAP in plastids. This chain is Lipid phosphate phosphatase epsilon 2, chloroplastic (LPPE2), found in Arabidopsis thaliana (Mouse-ear cress).